The following is a 256-amino-acid chain: Cysteine-rich repeat secretory protein 29 (256 aa).

A signal peptide spans 1–26; the sequence is MSSVFGSVHILAMIAIQLLLIHSVSS. 2 Gnk2-homologous domains span residues 33–136 and 142–253; these read YLHH…SVAS and YEND…LYPF.

Belongs to the cysteine-rich repeat secretory protein family.

It is found in the secreted. The polypeptide is Cysteine-rich repeat secretory protein 29 (CRRSP29) (Arabidopsis thaliana (Mouse-ear cress)).